A 44-amino-acid polypeptide reads, in one-letter code: Thymosin beta-12 (44 aa).

Basic and acidic residues-rich tracts occupy residues 1–25 (MSDKPDISEVTSFDKTKLKKTETQE) and 33–44 (ETIEQEKAAATS). A disordered region spans residues 1–44 (MSDKPDISEVTSFDKTKLKKTETQEKNPLPSKETIEQEKAAATS). Serine 2 carries the N-acetylserine modification.

The protein belongs to the thymosin beta family.

The protein resides in the cytoplasm. It localises to the cytoskeleton. Plays an important role in the organization of the cytoskeleton. Binds to and sequesters actin monomers (G actin) and therefore inhibits actin polymerization. The sequence is that of Thymosin beta-12 from Lateolabrax japonicus (Japanese sea perch).